The primary structure comprises 427 residues: Zinc-finger homeodomain protein 7 (427 aa).

Disordered regions lie at residues 1 to 60 and 91 to 118; these read MEYK…SLMD and LHAA…QRHH. Positions 10–28 are enriched in acidic residues; that stretch reads EEEEEEEEEEDDEEEDEEE. Positions 50–60 are enriched in low complexity; it reads SSASSPSSLMD. The ZF-HD dimerization-type; degenerate zinc-finger motif lies at 163–211; sequence YRECLKNHAARMGAHVLDGCGEFMSSPGDGAAALACAACGCHRSFHRRE. 2 disordered regions span residues 264–320 and 375–427; these read KRPP…SKKR and HLAK…QHDA. Low complexity-rich tracts occupy residues 271 to 283 and 301 to 312; these read VSPA…LAES and HAAAVVAASASA. A DNA-binding region (homeobox) is located at residues 318–381; it reads KKRFRTKFTA…NNKHLAKTPP (64 aa). Residues 380 to 401 are compositionally biased toward pro residues; the sequence is PPSPTSQPPPPPLHHDPSPPPP. Over residues 402 to 416 the composition is skewed to basic residues; the sequence is PHHHHHHHHHHHPPQ. Positions 417–427 are enriched in low complexity; that stretch reads HHQQQQQQHDA.

Homo- and heterodimer with other ZFHD proteins.

Its subcellular location is the nucleus. Functionally, putative transcription factor. The sequence is that of Zinc-finger homeodomain protein 7 (ZHD7) from Oryza sativa subsp. japonica (Rice).